A 186-amino-acid polypeptide reads, in one-letter code: Putative 5'(3')-deoxyribonucleotidase (186 aa).

The active-site Nucleophile is D6. The Mg(2+) site is built by D6, D8, and D137. D8 acts as the Proton donor in catalysis.

Belongs to the 5'(3')-deoxyribonucleotidase family. The cofactor is Mg(2+).

Dephosphorylates the 5' and 2'(3')-phosphates of deoxyribonucleotides. The protein is Putative 5'(3')-deoxyribonucleotidase of Bordetella pertussis (strain Tohama I / ATCC BAA-589 / NCTC 13251).